Reading from the N-terminus, the 185-residue chain is Signal peptidase complex subunit 3 (185 aa).

Topologically, residues 1–12 (MIVDTFTNRGST) are cytoplasmic. A helical; Signal-anchor for type II membrane protein transmembrane segment spans residues 13-34 (FFSKLSTVLFFLCAVITFQGVI). Residues 35 to 185 (QRREVELDTP…PFHKIITQPK (151 aa)) lie on the Lumenal side of the membrane. The N-linked (GlcNAc...) asparagine glycan is linked to N148.

Belongs to the SPCS3 family. As to quaternary structure, component of the signal peptidase complex (SPC) composed of a catalytic subunit sec11 and three accessory subunits spc1, spc2 and spc3. The complex induces a local thinning of the ER membrane which is used to measure the length of the signal peptide (SP) h-region of protein substrates. This ensures the selectivity of the complex towards h-regions shorter than 18-20 amino acids. SPC associates with the translocon complex.

The protein localises to the endoplasmic reticulum membrane. In terms of biological role, essential component of the signal peptidase complex (SPC) which catalyzes the cleavage of N-terminal signal sequences from nascent proteins as they are translocated into the lumen of the endoplasmic reticulum. Essential for the SPC catalytic activity, possibly by stabilizing and positioning the active center of the complex close to the lumenal surface. Essential for viability. This is Signal peptidase complex subunit 3 (spc3) from Schizosaccharomyces pombe (strain 972 / ATCC 24843) (Fission yeast).